We begin with the raw amino-acid sequence, 130 residues long: Small ribosomal subunit protein uS9 (130 aa).

The protein belongs to the universal ribosomal protein uS9 family.

This is Small ribosomal subunit protein uS9 from Pseudomonas paraeruginosa (strain DSM 24068 / PA7) (Pseudomonas aeruginosa (strain PA7)).